Consider the following 70-residue polypeptide: Melittin (70 aa).

Positions 1–21 are cleaved as a signal peptide; that stretch reads MKFLVNVALVFMVVYISYIYA. Residues 22-43 constitute a propeptide, removed by a dipeptidylpeptidase; the sequence is APEPEPAPEPEAEADAEADPEA. G44 is subject to N-formylglycine; partial. The residue at position 69 (Q69) is a Glutamine amide.

Belongs to the melittin family. As to quaternary structure, monomer (in solution and for integration into membranes), homotetramer (in solution and potentially as a toroidal pore in membranes), and potenially homomultimer (as a toroidal pore in membranes). Expressed by the venom gland.

It is found in the secreted. It localises to the target cell membrane. Its function is as follows. Melittin: Main toxin of bee venom with strong antimicrobial activity and hemolytic activity. It has enhancing effects on bee venom phospholipase A2 activity. This amphipathic toxin binds to negatively charged membrane surface and forms pore by inserting into lipid bilayers inducing the leakage of ions and molecules and the enhancement of permeability that ultimately leads to cell lysis. It acts as a voltage-gated pore with higher selectivity for anions over cations. The ion conductance has been shown to be voltage-dependent. Self-association of melittin in membranes is promoted by high ionic strength, but not by the presence of negatively charged lipids. In vivo, intradermal injection into healthy human volunteers produce sharp pain sensation and an inflammatory response. It produces pain by activating primary nociceptor cells directly and indirectly due to its ability to activate plasma membrane phospholipase A2 and its pore-forming activity. In the context of inflammation and cancer tests, is highly cytotoxic to normal cells, highly induces calcium signaling and almost completely prevents cAMP production. In addition, prevents LPS-induced nitric oxid (NO) synthesis but does not affect the IP3 signaling and pro-inflammatory activation of endothelial cells. Also shows significant antiproliferative activity on the breast cancer cell line MDA-MB-231. Functionally, melittin-S: 1.4-fold less hemolytic and adopts a less organized secondary structure than melittin. In terms of biological role, melittin-2: Has strong hemolytic activity. The polypeptide is Melittin (MELT) (Apis mellifera (Honeybee)).